The chain runs to 220 residues: Large ribosomal subunit protein uL1 (220 aa).

It belongs to the universal ribosomal protein uL1 family. As to quaternary structure, part of the 50S ribosomal subunit.

In terms of biological role, binds directly to 23S rRNA. The L1 stalk is quite mobile in the ribosome, and is involved in E site tRNA release. Functionally, protein L1 is also a translational repressor protein, it controls the translation of the L11 operon by binding to its mRNA. This is Large ribosomal subunit protein uL1 from Ehrlichia ruminantium (strain Gardel).